The primary structure comprises 349 residues: Quinolinate synthase (349 aa).

Iminosuccinate is bound by residues histidine 52 and serine 69. Cysteine 114 is a binding site for [4Fe-4S] cluster. Residues 140-142 (YFN) and serine 157 each bind iminosuccinate. Residue cysteine 201 coordinates [4Fe-4S] cluster. Iminosuccinate-binding positions include 227 to 229 (HPE) and threonine 255. [4Fe-4S] cluster is bound at residue cysteine 300.

It belongs to the quinolinate synthase family. Type 2 subfamily. The cofactor is [4Fe-4S] cluster.

Its subcellular location is the cytoplasm. It catalyses the reaction iminosuccinate + dihydroxyacetone phosphate = quinolinate + phosphate + 2 H2O + H(+). It functions in the pathway cofactor biosynthesis; NAD(+) biosynthesis; quinolinate from iminoaspartate: step 1/1. Catalyzes the condensation of iminoaspartate with dihydroxyacetone phosphate to form quinolinate. The polypeptide is Quinolinate synthase (Mycolicibacterium paratuberculosis (strain ATCC BAA-968 / K-10) (Mycobacterium paratuberculosis)).